The sequence spans 118 residues: MARIAGVNLPAQKHVWVGLQSIYGIGRTRSKKVCEVAGVASTTKIRDLSEPEIERLRAEVGKYIVEGDLRREIGIAIKRLMDLGCYRGLRHRRGLPLRGQRTRTNARTRKGPRKAIKK.

A disordered region spans residues Pro-96–Lys-118.

It belongs to the universal ribosomal protein uS13 family. Part of the 30S ribosomal subunit. Forms a loose heterodimer with protein S19. Forms two bridges to the 50S subunit in the 70S ribosome.

Its function is as follows. Located at the top of the head of the 30S subunit, it contacts several helices of the 16S rRNA. In the 70S ribosome it contacts the 23S rRNA (bridge B1a) and protein L5 of the 50S subunit (bridge B1b), connecting the 2 subunits; these bridges are implicated in subunit movement. Contacts the tRNAs in the A and P-sites. This is Small ribosomal subunit protein uS13 from Stenotrophomonas maltophilia (strain K279a).